The sequence spans 311 residues: Methionyl-tRNA formyltransferase (311 aa).

110 to 113 is a (6S)-5,6,7,8-tetrahydrofolate binding site; the sequence is SLLP.

It belongs to the Fmt family.

It catalyses the reaction L-methionyl-tRNA(fMet) + (6R)-10-formyltetrahydrofolate = N-formyl-L-methionyl-tRNA(fMet) + (6S)-5,6,7,8-tetrahydrofolate + H(+). Its function is as follows. Attaches a formyl group to the free amino group of methionyl-tRNA(fMet). The formyl group appears to play a dual role in the initiator identity of N-formylmethionyl-tRNA by promoting its recognition by IF2 and preventing the misappropriation of this tRNA by the elongation apparatus. This chain is Methionyl-tRNA formyltransferase, found in Streptococcus pyogenes serotype M49 (strain NZ131).